A 139-amino-acid chain; its full sequence is Large ribosomal subunit protein bL21 (139 aa).

This sequence belongs to the bacterial ribosomal protein bL21 family. In terms of assembly, part of the 50S ribosomal subunit. Contacts protein L20.

This protein binds to 23S rRNA in the presence of protein L20. The polypeptide is Large ribosomal subunit protein bL21 (Prochlorococcus marinus (strain NATL1A)).